A 312-amino-acid chain; its full sequence is Probable HTH-type transcriptional regulator LrhA (312 aa).

In terms of domain architecture, HTH lysR-type spans 11–68 (LDLDLLRTFVAVADLNTFAAAAAAVCRTQSAVSQQMQRLEQLVGKELFARHGRNKLLT). Positions 28 to 47 (FAAAAAAVCRTQSAVSQQMQ) form a DNA-binding region, H-T-H motif.

It belongs to the LysR transcriptional regulatory family.

In terms of biological role, not known, does not seem to act on the proton translocating NADH dehydrogenase genes (nuoA-N) which are part of the lrhA operon. This is Probable HTH-type transcriptional regulator LrhA (lrhA) from Escherichia coli (strain K12).